Reading from the N-terminus, the 601-residue chain is NADH-quinone oxidoreductase subunit C/D (601 aa).

The segment at 1 to 192 (MIVPDLVADA…PPYSLTEDQE (192 aa)) is NADH dehydrogenase I subunit C. The segment at 216 to 601 (DFMFLNLGPN…IDFVMADVDR (386 aa)) is NADH dehydrogenase I subunit D.

This sequence in the N-terminal section; belongs to the complex I 30 kDa subunit family. The protein in the C-terminal section; belongs to the complex I 49 kDa subunit family. As to quaternary structure, NDH-1 is composed of 13 different subunits. Subunits NuoB, CD, E, F, and G constitute the peripheral sector of the complex.

The protein localises to the cell inner membrane. The catalysed reaction is a quinone + NADH + 5 H(+)(in) = a quinol + NAD(+) + 4 H(+)(out). Functionally, NDH-1 shuttles electrons from NADH, via FMN and iron-sulfur (Fe-S) centers, to quinones in the respiratory chain. The immediate electron acceptor for the enzyme in this species is believed to be ubiquinone. Couples the redox reaction to proton translocation (for every two electrons transferred, four hydrogen ions are translocated across the cytoplasmic membrane), and thus conserves the redox energy in a proton gradient. The protein is NADH-quinone oxidoreductase subunit C/D of Gluconacetobacter diazotrophicus (strain ATCC 49037 / DSM 5601 / CCUG 37298 / CIP 103539 / LMG 7603 / PAl5).